A 495-amino-acid polypeptide reads, in one-letter code: Trimethylamine methyltransferase MttB1 (495 aa).

Position 334 (O334) is a non-standard amino acid, pyrrolysine.

Belongs to the trimethylamine methyltransferase family. In terms of assembly, can form a complex with MttC.

It carries out the reaction Co(I)-[trimethylamine-specific corrinoid protein] + trimethylamine + H(+) = methyl-Co(III)-[trimethylamine-specific corrinoid protein] + dimethylamine. It participates in one-carbon metabolism; methanogenesis from trimethylamine. In terms of biological role, catalyzes the transfer of a methyl group from trimethylamine to the corrinoid cofactor of MttC. The sequence is that of Trimethylamine methyltransferase MttB1 (mttB1) from Methanosarcina acetivorans (strain ATCC 35395 / DSM 2834 / JCM 12185 / C2A).